The following is a 210-amino-acid chain: Ribosomal RNA small subunit methyltransferase G (210 aa).

Residues glycine 76, methionine 81, 127 to 128, and arginine 145 each bind S-adenosyl-L-methionine; that span reads VE.

This sequence belongs to the methyltransferase superfamily. RNA methyltransferase RsmG family.

The protein localises to the cytoplasm. It catalyses the reaction guanosine(527) in 16S rRNA + S-adenosyl-L-methionine = N(7)-methylguanosine(527) in 16S rRNA + S-adenosyl-L-homocysteine. In terms of biological role, specifically methylates the N7 position of guanine in position 527 of 16S rRNA. In Acinetobacter baumannii (strain SDF), this protein is Ribosomal RNA small subunit methyltransferase G.